The following is a 235-amino-acid chain: Carbohydrate deacetylase (235 aa).

2 residues coordinate Mg(2+): H61 and H124.

The protein belongs to the YdjC deacetylase family. The cofactor is Mg(2+).

Its function is as follows. Probably catalyzes the deacetylation of acetylated carbohydrates an important step in the degradation of oligosaccharides. This Bacillus cereus (strain B4264) protein is Carbohydrate deacetylase.